We begin with the raw amino-acid sequence, 652 residues long: DNA polymerase epsilon subunit B (652 aa).

It belongs to the DNA polymerase epsilon subunit B family. In terms of assembly, heterotetramer. Consists of four subunits: POL2, DPB2, DPB3 and DPB4.

Its subcellular location is the nucleus. As accessory component of the DNA polymerase epsilon (DNA polymerase II) participates in chromosomal DNA replication. The protein is DNA polymerase epsilon subunit B (DPB2) of Yarrowia lipolytica (strain CLIB 122 / E 150) (Yeast).